Consider the following 415-residue polypeptide: Tyrosine-protein phosphatase non-receptor type 2 (415 aa).

The Tyrosine-protein phosphatase domain occupies 5–275 (IEREFEELDT…RFSYMAIIEG (271 aa)). Tyr22 is modified (phosphotyrosine). Residue Ser52 is modified to Phosphoserine. Phosphotyrosine is present on Tyr68. Substrate-binding positions include Asp182, 216-222 (CSAGIGR), and Gln260. Cys216 functions as the Phosphocysteine intermediate in the catalytic mechanism. Cys216 is modified (S-nitrosocysteine). Residues Ser293, Ser298, and Ser304 each carry the phosphoserine modification. An endoplasmic reticulum location region spans residues 346–415 (ESALRKRIRE…WTLFFQQNAL (70 aa)). The tract at residues 376 to 415 (ERKRKRWLYWQPILTKMGFMSVILVGAFVGWTLFFQQNAL) is mediates interaction with STX17.

This sequence belongs to the protein-tyrosine phosphatase family. Non-receptor class 1 subfamily. In terms of assembly, interacts with RMDN3. Isoform 1 interacts with TMED9. Isoform 1 interacts with STX17; dephosphorylates STX17. Interacts with ITGA1 (via cytoplasmic domain); activates the phosphatase activity towards EGFR. Interacts with TRAF2; probably involved in tumor necrosis factor-mediated signaling. Interacts with MET. Interacts with FAM220A and STAT3; interaction with FAM220A promotes interaction of PTPN2 with transcriptional activator STAT3, leading to dephosphorylation of STAT3 by PTPN2 and negative regulation of STAT3 transcriptional activator activity. In terms of processing, specifically phosphorylated in a cell cycle-dependent manner by cyclin-dependent kinases CDK1 and CDK2. Probably activated through phosphorylation by PKR. As to expression, ubiquitously expressed. Isoform 2 is probably the major isoform. Isoform 1 is expressed in T-cells and in placenta.

The protein localises to the endoplasmic reticulum. It is found in the endoplasmic reticulum-Golgi intermediate compartment. Its subcellular location is the nucleus. The protein resides in the cytoplasm. It localises to the cell membrane. It carries out the reaction O-phospho-L-tyrosyl-[protein] + H2O = L-tyrosyl-[protein] + phosphate. In terms of biological role, non-receptor type tyrosine-specific phosphatase that dephosphorylates receptor protein tyrosine kinases including INSR, EGFR, CSF1R, PDGFR. Also dephosphorylates non-receptor protein tyrosine kinases like JAK1, JAK2, JAK3, Src family kinases, STAT1, STAT3 and STAT6 either in the nucleus or the cytoplasm. Negatively regulates numerous signaling pathways and biological processes like hematopoiesis, inflammatory response, cell proliferation and differentiation, and glucose homeostasis. Plays a multifaceted and important role in the development of the immune system. Functions in T-cell receptor signaling through dephosphorylation of FYN and LCK to control T-cells differentiation and activation. Dephosphorylates CSF1R, negatively regulating its downstream signaling and macrophage differentiation. Negatively regulates cytokine (IL2/interleukin-2 and interferon)-mediated signaling through dephosphorylation of the cytoplasmic kinases JAK1, JAK3 and their substrate STAT1, that propagate signaling downstream of the cytokine receptors. Also regulates the IL6/interleukin-6 and IL4/interleukin-4 cytokine signaling through dephosphorylation of STAT3 and STAT6 respectively. In addition to the immune system, it is involved in anchorage-dependent, negative regulation of EGF-stimulated cell growth. Activated by the integrin ITGA1/ITGB1, it dephosphorylates EGFR and negatively regulates EGF signaling. Dephosphorylates PDGFRB and negatively regulates platelet-derived growth factor receptor-beta signaling pathway and therefore cell proliferation. Negatively regulates tumor necrosis factor-mediated signaling downstream via MAPK through SRC dephosphorylation. May also regulate the hepatocyte growth factor receptor signaling pathway through dephosphorylation of the hepatocyte growth factor receptor MET. Also plays an important role in glucose homeostasis. For instance, negatively regulates the insulin receptor signaling pathway through the dephosphorylation of INSR and control gluconeogenesis and liver glucose production through negative regulation of the IL6 signaling pathways. May also bind DNA. The sequence is that of Tyrosine-protein phosphatase non-receptor type 2 (PTPN2) from Homo sapiens (Human).